Consider the following 168-residue polypeptide: Ubiquitin-conjugating enzyme E2 7 (168 aa).

The disordered stretch occupies residues 1-21 (MATAPARRASSSRSSSEISRT). The region spanning 6–166 (ARRASSSRSS…VRRAVRKSQE (161 aa)) is the UBC core domain. Cys92 functions as the Glycyl thioester intermediate in the catalytic mechanism.

This sequence belongs to the ubiquitin-conjugating enzyme family.

It carries out the reaction S-ubiquitinyl-[E1 ubiquitin-activating enzyme]-L-cysteine + [E2 ubiquitin-conjugating enzyme]-L-cysteine = [E1 ubiquitin-activating enzyme]-L-cysteine + S-ubiquitinyl-[E2 ubiquitin-conjugating enzyme]-L-cysteine.. The protein operates within protein modification; protein ubiquitination. In terms of biological role, catalyzes the covalent attachment of ubiquitin to other proteins so as to signal them for selective protein degradation. Involved in the formation of multiubiquitin chains. This Triticum aestivum (Wheat) protein is Ubiquitin-conjugating enzyme E2 7 (UBC7).